The chain runs to 223 residues: DNA mismatch repair protein MutH (223 aa).

The protein belongs to the MutH family.

It localises to the cytoplasm. Its function is as follows. Sequence-specific endonuclease that cleaves unmethylated GATC sequences. It is involved in DNA mismatch repair. This chain is DNA mismatch repair protein MutH, found in Haemophilus influenzae (strain PittGG).